A 140-amino-acid polypeptide reads, in one-letter code: Putative pre-16S rRNA nuclease (140 aa).

This sequence belongs to the YqgF nuclease family.

It localises to the cytoplasm. Functionally, could be a nuclease involved in processing of the 5'-end of pre-16S rRNA. This is Putative pre-16S rRNA nuclease from Lachnospira eligens (strain ATCC 27750 / DSM 3376 / VPI C15-48 / C15-B4) (Eubacterium eligens).